Reading from the N-terminus, the 284-residue chain is Bifunctional protein FolD (284 aa).

NADP(+) is bound by residues G166 to S168 and I232.

It belongs to the tetrahydrofolate dehydrogenase/cyclohydrolase family. In terms of assembly, homodimer.

It catalyses the reaction (6R)-5,10-methylene-5,6,7,8-tetrahydrofolate + NADP(+) = (6R)-5,10-methenyltetrahydrofolate + NADPH. The catalysed reaction is (6R)-5,10-methenyltetrahydrofolate + H2O = (6R)-10-formyltetrahydrofolate + H(+). It participates in one-carbon metabolism; tetrahydrofolate interconversion. Catalyzes the oxidation of 5,10-methylenetetrahydrofolate to 5,10-methenyltetrahydrofolate and then the hydrolysis of 5,10-methenyltetrahydrofolate to 10-formyltetrahydrofolate. In Azotobacter vinelandii (strain DJ / ATCC BAA-1303), this protein is Bifunctional protein FolD.